The sequence spans 129 residues: Small ribosomal subunit protein uS11 (129 aa).

It belongs to the universal ribosomal protein uS11 family. In terms of assembly, part of the 30S ribosomal subunit. Interacts with proteins S7 and S18. Binds to IF-3.

Located on the platform of the 30S subunit, it bridges several disparate RNA helices of the 16S rRNA. Forms part of the Shine-Dalgarno cleft in the 70S ribosome. This is Small ribosomal subunit protein uS11 from Pseudomonas fluorescens (strain ATCC BAA-477 / NRRL B-23932 / Pf-5).